Consider the following 494-residue polypeptide: Tetracenomycin biosynthesis bifunctional cyclase/O-methyl transferase TcmN (494 aa).

Residues 11–140 form a polyketide cyclase region; the sequence is VNAPFELVWD…TTTRANMERI (130 aa). The Proton acceptor; for cyclase activity role is filled by serine 67. Catalysis depends on proton donor; for cyclase activity residues arginine 69 and arginine 82. The methyltransferase stretch occupies residues 169–494; it reads LLLAASGRLA…TWTTLECRPV (326 aa). S-adenosyl-L-methionine-binding positions include aspartate 358 and 384-386; that span reads GDF. Histidine 405 acts as the Proton acceptor; for methyltransferase activity in catalysis.

In the C-terminal section; belongs to the class I-like SAM-binding methyltransferase superfamily. Cation-independent O-methyltransferase family. As to quaternary structure, the tetracenomycin polyketide synthase (TCM PKS) is composed of a ketosynthase complex (TcmKL), an acyl carrier protein (TcmM), a cyclase (TcmN) and a probable second cyclase (TcmJ). TcmN is a homodimer in solution.

It carries out the reaction 10 malonyl-CoA + 8 H(+) = tetracenomycin F2 + 10 CO2 + 10 CoA + 2 H2O. It participates in antibiotic biosynthesis; tetracenomycin C biosynthesis. Its function is as follows. Involved in the biosynthesis of tetracenomycin C (TCM C). Part of a type II polyketide synthase (PKS) that catalyzes the synthesis of tetracenomycin F2 (TCM F2), a precursor of TCM C, from malonyl-CoA. The TcmN N-terminal domain, when coupled with the other components of the PKS, catalyzes the cyclization and aromatization of the linear polyketide intermediate. Catalyzes the cyclization of the first and second rings. In addition, the C-terminal domain acts as a methyltransferase. It catalyzes the specific O-methylation of tetracenomycin D3 (TCM D3) to TCM B3, using S-adenosyl-L-methionine as the methyl donor. The sequence is that of Tetracenomycin biosynthesis bifunctional cyclase/O-methyl transferase TcmN from Streptomyces glaucescens.